Here is a 298-residue protein sequence, read N- to C-terminus: MFNKDKVKIGIAPIAWTNDDMPELGAENTFEQCISEMALSGFKGTEVGNKYPRDTKVLKRALELRDMQIASAWFSAFLTTKPYEETEKAFIKHRDFLYEMRSKVIVISEQGHSIQGKMETPIFEEKPIFTEEEWKDLAKGLNKLGKLAKEKNMKVVYHHHMGTGVQTTEEIDKLMEMTDPTLVYLLYDTGHLVFSGEDPIVVLRKYINRIKHVHLKDIREDVVKIVKQKKMSFLQAVKLGAFTVPGDGDIDFKPVFNILAENNYEGWLLVEAEQDPARANPLEYAIKARKYIQEKAAI.

The protein belongs to the IolE/MocC family. Requires glutathione as cofactor. Co(2+) serves as cofactor. It depends on Mn(2+) as a cofactor.

The catalysed reaction is scyllo-inosose = 3D-3,5/4-trihydroxycyclohexane-1,2-dione + H2O. Its pathway is polyol metabolism; myo-inositol degradation into acetyl-CoA; acetyl-CoA from myo-inositol: step 2/7. Functionally, catalyzes the dehydration of inosose (2-keto-myo-inositol, 2KMI or 2,4,6/3,5-pentahydroxycyclohexanone) to 3D-(3,5/4)-trihydroxycyclohexane-1,2-dione (D-2,3-diketo-4-deoxy-epi-inositol). This Clostridium tetani (strain Massachusetts / E88) protein is Inosose dehydratase.